Reading from the N-terminus, the 1608-residue chain is Mitogen-activated protein kinase kinase kinase 4 (1608 aa).

The segment covering 1–23 has biased composition (low complexity); it reads MREAAAALVPPPAFAVTPAAAME. Disordered regions lie at residues 1-136 and 429-478; these read MREA…ENVE and IPSP…RQPI. A compositionally biased stretch (pro residues) spans 24–37; the sequence is EPPPPPPPPPPPPE. A compositionally biased stretch (acidic residues) spans 66–76; that stretch reads SDLEDFSDETN. Ser84 carries the phosphoserine modification. Residues 91–101 are compositionally biased toward basic residues; sequence QMKRMSTKHQR. Ser431 is modified (phosphoserine). Residue Thr447 is modified to Phosphothreonine. 2 positions are modified to phosphoserine: Ser456 and Ser457. Residues 456–466 show a composition bias toward acidic residues; the sequence is SSTDESEEEQI. Residue Thr458 is modified to Phosphothreonine. Ser461, Ser481, and Ser499 each carry phosphoserine. 3 disordered regions span residues 1157–1190, 1202–1231, and 1244–1274; these read CHSD…GSPA, ASRP…SVPE, and FRSL…TRRS. Positions 1217–1230 are enriched in polar residues; it reads SISSAHDTRGSSVP. Residues Ser1252 and Ser1274 each carry the phosphoserine modification. A compositionally biased stretch (basic and acidic residues) spans 1252–1261; that stretch reads SPTEERDEPA. Residues 1343–1601 enclose the Protein kinase domain; sequence WQRGNKIGEG…ASQLLDHSFV (259 aa). ATP-binding positions include 1349–1357 and Lys1372; that span reads IGEGQYGKV. Asp1463 (proton acceptor) is an active-site residue.

It belongs to the protein kinase superfamily. STE Ser/Thr protein kinase family. MAP kinase kinase kinase subfamily. Monomer and homodimer. Homodimerization enhances kinase activity. Interacts with TRAF4; this promotes homodimerization. Binds both upstream activators and downstream substrates in multimolecular complexes. Interacts with AXIN1 and DIXDC1; interaction with DIXDC1 prevents interaction with AXIN1. Interacts with GADD45 and MAP2K6. Interacts with ZFP36; this interaction enhances the association with SH3KBP1/CIN85. Interacts with SH3KBP1; this interaction enhances the association with ZFP36. Interacts with CDC42. Requires Mg(2+) as cofactor. In terms of tissue distribution, expressed at high levels in heart, placenta, skeletal muscle and pancreas, and at lower levels in other tissues.

The protein localises to the cytoplasm. It localises to the perinuclear region. It catalyses the reaction L-seryl-[protein] + ATP = O-phospho-L-seryl-[protein] + ADP + H(+). The catalysed reaction is L-threonyl-[protein] + ATP = O-phospho-L-threonyl-[protein] + ADP + H(+). Its activity is regulated as follows. N-terminal autoinhibitory domain interacts with the C-terminal kinase domain, inhibiting kinase activity, and preventing interaction with its substrate, MAP2K6. The GADD45 proteins activate the kinase by binding to the N-terminal domain. Activated by phosphorylation on Thr-1505. In terms of biological role, component of a protein kinase signal transduction cascade. Activates the CSBP2, P38 and JNK MAPK pathways, but not the ERK pathway. Specifically phosphorylates and activates MAP2K4 and MAP2K6. The polypeptide is Mitogen-activated protein kinase kinase kinase 4 (MAP3K4) (Homo sapiens (Human)).